Here is a 78-residue protein sequence, read N- to C-terminus: Large ribosomal subunit protein bL28 (78 aa).

The disordered stretch occupies residues 1–25; the sequence is MSRVCQVTGKRPAVGNNRSHAKNAT.

The protein belongs to the bacterial ribosomal protein bL28 family.

This Aliivibrio fischeri (strain ATCC 700601 / ES114) (Vibrio fischeri) protein is Large ribosomal subunit protein bL28.